The primary structure comprises 243 residues: Ras-related protein Rab-12 (243 aa).

Residue Met-1 is modified to N-acetylmethionine. A disordered region spans residues 1-36 (MDPSAALHRRPAGGGLGAVSPALSGGQARRRKQPPR). Residues Ser-20 and Ser-24 each carry the phosphoserine modification. Residues Gly-51, Val-52, Gly-53, Lys-54, Thr-55, Ser-72, and Thr-73 each contribute to the GTP site. Thr-55 contributes to the Mg(2+) binding site. 2 short sequence motifs (switch) span residues 64–78 (DTFCEACKSTVGVDF) and 96–113 (DTAGQERFNSITSAYYRS). Positions 73 and 96 each coordinate Mg(2+). Gly-99 serves as a coordination point for GTP. Ser-105 is subject to Phosphoserine. 6 residues coordinate GTP: Asn-154, Lys-155, Asp-157, Ser-185, Ala-186, and Lys-187. 2 S-geranylgeranyl cysteine lipidation sites follow: Cys-242 and Cys-243.

Belongs to the small GTPase superfamily. Rab family. As to quaternary structure, interacts with RABIF and OPTN. Interacts with LRRK2; interaction facilitates phosphorylation of Ser-105. Interacts with GDI1, GDI2 and CHM; these interactions are disrupted by phosphorylation on Ser-105. Interacts with RILPL1 and RILPL2; these interactions are dependent on phosphorylation of Ser-105. The cofactor is Mg(2+). Post-translationally, phosphorylation of Ser-105 in the switch II region by LRRK2 prevents the association of RAB regulatory proteins, including CHM and RAB GDP dissociation inhibitors GDI1 and GDI2. In terms of tissue distribution, highest levels in skeletal and cardiac muscle. Also found in comparable amounts in brain, spinal cord and lung. Also detected in testis where it is expressed by Sertoli cells of the seminiferous tubules (at protein level).

Its subcellular location is the recycling endosome membrane. It localises to the lysosome membrane. It is found in the golgi apparatus membrane. The protein localises to the cytoplasmic vesicle. The protein resides in the autophagosome. It catalyses the reaction GTP + H2O = GDP + phosphate + H(+). With respect to regulation, regulated by guanine nucleotide exchange factors (GEFs) including DENND3 which promote the exchange of bound GDP for free GTP. Regulated by GTPase activating proteins (GAPs) which increase the GTP hydrolysis activity. Inhibited by GDP dissociation inhibitors (GDIs). Its function is as follows. The small GTPases Rab are key regulators of intracellular membrane trafficking, from the formation of transport vesicles to their fusion with membranes. Rabs cycle between an inactive GDP-bound form and an active GTP-bound form that is able to recruit to membranes different sets of downstream effectors directly responsible for vesicle formation, movement, tethering and fusion. RAB12 may play a role in protein transport from recycling endosomes to lysosomes regulating, for instance, the degradation of the transferrin receptor. Involved in autophagy. The polypeptide is Ras-related protein Rab-12 (Rattus norvegicus (Rat)).